The following is a 532-amino-acid chain: Wee1-like protein kinase 2 (532 aa).

Residues I123–S166 are disordered. Residues F188–A465 form the Protein kinase domain. ATP is bound by residues I194–V202 and K217. D315 (proton acceptor) is an active-site residue. Mg(2+) contacts are provided by N320 and D354. Residues A469–L495 are a coiled coil.

Belongs to the protein kinase superfamily. Ser/Thr protein kinase family. WEE1 subfamily.

Its subcellular location is the nucleus. The catalysed reaction is L-tyrosyl-[protein] + ATP = O-phospho-L-tyrosyl-[protein] + ADP + H(+). Its function is as follows. Oocyte-specific protein tyrosine kinase that phosphorylates and inhibits cdk1 and acts as a key regulator of meiosis. Required to maintain meiotic arrest in oocytes by phosphorylating cdk1 at 'Tyr-15', leading to inhibit cdk1 activity and prevent meiotic reentry. The polypeptide is Wee1-like protein kinase 2 (wee2) (Danio rerio (Zebrafish)).